The chain runs to 390 residues: Homoserine O-acetyltransferase (390 aa).

In terms of domain architecture, AB hydrolase-1 spans 55–366; it reads NAILINHAFS…ESDCGHDAFL (312 aa). Ser163 (nucleophile) is an active-site residue. Arg232 contacts substrate. Catalysis depends on residues Asp329 and His362. Asp363 is a substrate binding site.

It belongs to the AB hydrolase superfamily. MetX family. In terms of assembly, homodimer.

Its subcellular location is the cytoplasm. It carries out the reaction L-homoserine + acetyl-CoA = O-acetyl-L-homoserine + CoA. It participates in amino-acid biosynthesis; L-methionine biosynthesis via de novo pathway; O-acetyl-L-homoserine from L-homoserine: step 1/1. Functionally, transfers an acetyl group from acetyl-CoA to L-homoserine, forming acetyl-L-homoserine. This chain is Homoserine O-acetyltransferase, found in Desulfotalea psychrophila (strain LSv54 / DSM 12343).